The primary structure comprises 460 residues: 3-ketoacyl-CoA synthase 7 (460 aa).

The helical transmembrane segment at Phe21–Phe41 threads the bilayer. The FAE domain maps to Tyr38–Trp328. Catalysis depends on residues Cys183, His262, His345, His349, and Asn382.

The protein belongs to the thiolase-like superfamily. Chalcone/stilbene synthases family. Expressed in flowers.

The protein resides in the membrane. It carries out the reaction a very-long-chain acyl-CoA + malonyl-CoA + H(+) = a very-long-chain 3-oxoacyl-CoA + CO2 + CoA. The protein operates within lipid metabolism; fatty acid biosynthesis. This is 3-ketoacyl-CoA synthase 7 from Arabidopsis thaliana (Mouse-ear cress).